The primary structure comprises 183 residues: UPF0200 protein MmarC6_1392 (183 aa).

Residue 8–15 coordinates ATP; sequence GMPGSGKS.

This sequence belongs to the UPF0200 family.

In Methanococcus maripaludis (strain C6 / ATCC BAA-1332), this protein is UPF0200 protein MmarC6_1392.